Here is a 385-residue protein sequence, read N- to C-terminus: ATP phosphoribosyltransferase regulatory subunit (385 aa).

Belongs to the class-II aminoacyl-tRNA synthetase family. HisZ subfamily. Heteromultimer composed of HisG and HisZ subunits.

The protein localises to the cytoplasm. The protein operates within amino-acid biosynthesis; L-histidine biosynthesis; L-histidine from 5-phospho-alpha-D-ribose 1-diphosphate: step 1/9. Required for the first step of histidine biosynthesis. May allow the feedback regulation of ATP phosphoribosyltransferase activity by histidine. In Lysinibacillus sphaericus (strain C3-41), this protein is ATP phosphoribosyltransferase regulatory subunit.